Here is a 301-residue protein sequence, read N- to C-terminus: GTPase Era (301 aa).

The Era-type G domain maps to 7–175 (YCGFIAIVGR…ASIVRKHLPE (169 aa)). The tract at residues 15-22 (GRPNVGKS) is G1. 15–22 (GRPNVGKS) is a GTP binding site. The interval 41-45 (QTTRH) is G2. The G3 stretch occupies residues 62-65 (DTPG). Residues 62 to 66 (DTPGL) and 124 to 127 (NKVD) contribute to the GTP site. The interval 124-127 (NKVD) is G4. Residues 154–156 (ISA) form a G5 region. The KH type-2 domain maps to 206–283 (LGAELPYSVT…HLELWVKVKS (78 aa)).

Belongs to the TRAFAC class TrmE-Era-EngA-EngB-Septin-like GTPase superfamily. Era GTPase family. In terms of assembly, monomer.

The protein localises to the cytoplasm. It localises to the cell inner membrane. In terms of biological role, an essential GTPase that binds both GDP and GTP, with rapid nucleotide exchange. Plays a role in 16S rRNA processing and 30S ribosomal subunit biogenesis and possibly also in cell cycle regulation and energy metabolism. In Salmonella arizonae (strain ATCC BAA-731 / CDC346-86 / RSK2980), this protein is GTPase Era.